The following is a 1081-amino-acid chain: Psi-producing oxygenase A (1081 aa).

The segment at Thr105–Val446 is linoleate 8R-lipoxygenase. Residue His202 participates in heme b binding. Residue Tyr374 is part of the active site. A heme b-binding site is contributed by His377. The interval Ile654–Phe1081 is 9,12-octadecadienoate 8-hydroperoxide 8R-isomerase.

It belongs to the peroxidase family. As to quaternary structure, homotetramer. Heme b serves as cofactor.

The enzyme catalyses (9Z,12Z)-octadecadienoate + O2 = (8R,9Z,12Z)-8-hydroperoxyoctadeca-9,12-dienoate. The catalysed reaction is (8R,9Z,12Z)-8-hydroperoxyoctadeca-9,12-dienoate = (5S,8R,9Z,12Z)-5,8-dihydroxyoctadeca-9,12-dienoate. Bifunctional heme-containing enzyme that oxidizes linoleic acid to (8R,9Z,12Z)-8-hydroperoxyoctadeca-9,12-dienoate (within the N-terminal heme peroxidase domain), which is subsequently isomerized to (5S,8R,9Z,12Z)-5,8-dihydroxyoctadeca-9,12-dienoate (within the C-terminal P450 heme thiolate domain). Oxidized unsaturated fatty acids, so-called oxylipins, derived from endogenous fatty acids, influence the development of the asexual conidiophores and sexual cleistothecia and regulate the secondary metabolism. These substances were collectively named psi factors and are primarily a mixture of hydroxylated oleic, linoleic and alpha-linolenic acids. They are termed psi-beta, psi-alpha, and psi-gamma, respectively. This chain is Psi-producing oxygenase A (ppoA), found in Emericella nidulans (Aspergillus nidulans).